The chain runs to 775 residues: Beta-galactosidase 7 (775 aa).

The signal sequence occupies residues Met-1–Ala-17. The active-site Proton donor is Glu-185. Catalysis depends on Glu-256, which acts as the Nucleophile. N-linked (GlcNAc...) asparagine glycosylation is found at Asn-257, Asn-266, Asn-277, Asn-358, and Asn-602. An SUEL-type lectin domain is found at Arg-689–Arg-775.

This sequence belongs to the glycosyl hydrolase 35 family.

It localises to the secreted. Its subcellular location is the extracellular space. The protein resides in the apoplast. The enzyme catalyses Hydrolysis of terminal non-reducing beta-D-galactose residues in beta-D-galactosides.. The polypeptide is Beta-galactosidase 7 (Oryza sativa subsp. japonica (Rice)).